Reading from the N-terminus, the 344-residue chain is Mitochondrial substrate carrier family protein D (344 aa).

Residues 1-22 (MDSTKTNNKWAAAGILNSVGKD) are Mitochondrial intermembrane-facing. Solcar repeat units follow at residues 17–104 (NSVG…CQSY), 119–212 (IPYH…MKRK), and 239–327 (VPAW…TRNL). A helical membrane pass occupies residues 23–43 (FVAGSVGGMSSIMAGHPFDTI). The Mitochondrial matrix portion of the chain corresponds to 44-75 (KVMLQDASGNLPKFKNGFQALKYIMKVDGIKG). A helical transmembrane segment spans residues 76–96 (IYRGLSVPLFSVSFTNSVFFA). Topologically, residues 97-116 (TNNFCQSYFHPPCKDENGED) are mitochondrial intermembrane. Residues 117–137 (ILIPYHKAAAAGAIAGGVISL) form a helical membrane-spanning segment. Over 138 to 186 (LITPRDLVKSKLQVQCRPFGSTNVSLQYKGPIDVIRQTIKRDGIKGMFK) the chain is Mitochondrial matrix. The helical transmembrane segment at 187 to 207 (GIRSTFCRDIPGDAVYFVVYE) threads the bilayer. Residues 208 to 238 (FMKRKLLALSKNNNNNNNNNDNNDNSSPKAG) lie on the Mitochondrial intermembrane side of the membrane. Residues 239–259 (VPAWVAIGAGGCAGMSFWMSI) traverse the membrane as a helical segment. The Mitochondrial matrix portion of the chain corresponds to 260–301 (YPMDVVKTRIQTQPDHLPPQYTSVLQTITKIYREEGISVFFR). The chain crosses the membrane as a helical span at residues 302–321 (GFSATILRAFPTSAVNFLMY). Residues 322-344 (ETTRNLLNSKDPFYNNNDHYNAE) lie on the Mitochondrial intermembrane side of the membrane.

The protein belongs to the mitochondrial carrier (TC 2.A.29) family.

It localises to the mitochondrion inner membrane. In terms of biological role, calcium-dependent mitochondrial solute carrier. Mitochondrial solute carriers shuttle metabolites, nucleotides, and cofactors through the mitochondrial inner membrane. The sequence is that of Mitochondrial substrate carrier family protein D (mcfD) from Dictyostelium discoideum (Social amoeba).